The primary structure comprises 167 residues: Biogenesis of lysosome-related organelles complex 1 subunit 6 (167 aa).

The span at 1 to 11 (MLKSSNINSVL) shows a compositional bias: polar residues. Residues 1-38 (MLKSSNINSVLNELPNDPARDSTAQSSHNGKPKQDAET) are disordered. The stretch at 102 to 160 (ARLNDMMSDVKRYKDKLTKIKKEMQGVYQRTKELKKRAANVAACKQRDYQRKLERLQHE) forms a coiled coil.

The protein belongs to the BLOC1S6 family. In terms of assembly, component of the biogenesis of lysosome-related organelles complex-1 (BLOC-1) composed of Blos1, Blos2, Blos3, Blos4, Dysb, Muted, Pldn and Snapin. Interacts with Blos1, Blos4 and Dysb.

It is found in the synapse. The protein resides in the cytoplasm. Its subcellular location is the cytoskeleton. It localises to the myofibril. The protein localises to the sarcomere. It is found in the z line. In terms of biological role, component of the biogenesis of lysosome-related organelles complex-1 (BLOC-1) involved in pigment granule biogenesis and membrane trafficking in synapses. In response to high synaptic activity at neuromuscular junctions, plays a key role in promoting efficient synaptic vesicle recycling and re-formation through early endosomes. This is Biogenesis of lysosome-related organelles complex 1 subunit 6 from Drosophila melanogaster (Fruit fly).